A 160-amino-acid polypeptide reads, in one-letter code: SsrA-binding protein (160 aa).

Positions 134–160 (YDKRDTERERDSNRELHRAVRNKGKED) are disordered.

The protein belongs to the SmpB family.

It localises to the cytoplasm. In terms of biological role, required for rescue of stalled ribosomes mediated by trans-translation. Binds to transfer-messenger RNA (tmRNA), required for stable association of tmRNA with ribosomes. tmRNA and SmpB together mimic tRNA shape, replacing the anticodon stem-loop with SmpB. tmRNA is encoded by the ssrA gene; the 2 termini fold to resemble tRNA(Ala) and it encodes a 'tag peptide', a short internal open reading frame. During trans-translation Ala-aminoacylated tmRNA acts like a tRNA, entering the A-site of stalled ribosomes, displacing the stalled mRNA. The ribosome then switches to translate the ORF on the tmRNA; the nascent peptide is terminated with the 'tag peptide' encoded by the tmRNA and targeted for degradation. The ribosome is freed to recommence translation, which seems to be the essential function of trans-translation. The chain is SsrA-binding protein from Pseudomonas fluorescens (strain SBW25).